The following is a 152-amino-acid chain: Ribosome maturation factor RimP (152 aa).

This sequence belongs to the RimP family.

It is found in the cytoplasm. Required for maturation of 30S ribosomal subunits. This is Ribosome maturation factor RimP from Shigella boydii serotype 4 (strain Sb227).